A 160-amino-acid chain; its full sequence is Class II hydrophobin 8 (160 aa).

4 cysteine pairs are disulfide-bonded: C92–C141, C102–C132, C103–C115, and C142–C153.

This sequence belongs to the cerato-ulmin hydrophobin family. Homodimer. Homodimers further self-assemble to form highly ordered films at water-air interfaces through intermolecular interactions.

Its subcellular location is the secreted. It is found in the cell wall. Functionally, aerial growth, conidiation, and dispersal of filamentous fungi in the environment rely upon a capability of their secreting small amphipathic proteins called hydrophobins (HPBs) with low sequence identity. Class I can self-assemble into an outermost layer of rodlet bundles on aerial cell surfaces, conferring cellular hydrophobicity that supports fungal growth, development and dispersal; whereas Class II form highly ordered films at water-air interfaces through intermolecular interactions but contribute nothing to the rodlet structure. This is Class II hydrophobin 8 from Trichoderma asperellum (strain ATCC 204424 / CBS 433.97 / NBRC 101777).